We begin with the raw amino-acid sequence, 274 residues long: 26S proteasome regulatory subunit RPN12 (274 aa).

The PCI domain occupies 76–251 (DSFENYFNQL…KADYEDEMMH (176 aa)).

It belongs to the proteasome subunit S14 family.

Acts as a regulatory subunit of the 26S proteasome which is involved in the ATP-dependent degradation of ubiquitinated proteins. Necessary for activation of the CDC28 kinase. In Saccharomyces cerevisiae (strain ATCC 204508 / S288c) (Baker's yeast), this protein is 26S proteasome regulatory subunit RPN12 (RPN12).